A 507-amino-acid polypeptide reads, in one-letter code: Tryptamine 4-monooxygenase (507 aa).

The signal sequence occupies residues 1-19 (MIVLLVSLVLAGCIYYANA). The segment at 403 to 425 (PNPSEFRPERYLSSDGKPDPTVR) is disordered. The segment covering 408-425 (FRPERYLSSDGKPDPTVR) has biased composition (basic and acidic residues). A heme-binding site is contributed by Cys439.

The protein belongs to the cytochrome P450 family. Heme serves as cofactor.

It carries out the reaction tryptamine + AH2 + O2 = 4-hydroxytryptamine + A + H2O. Its pathway is secondary metabolite biosynthesis. In terms of biological role, tryptamine 4-monooxygenase; part of the gene cluster that mediates the biosynthesis of psilocybin, a psychotropic tryptamine-derived natural product. The first step in the pathway is the decarboxylation of L-tryptophan to tryptamine by the decarboxylase psiD. PsiD does not decarboxylate phenylalanine, tyrosine, or 5-hydroxy- L -tryptophan (5-HTP). 4-hydroxy-L-tryptophan is accepted as substrate by psiD as well. The cytochrome P450 monooxygenase psiH then converts tryptamine to 4-hydroxytryptamine. The kinase psiK catalyzes the 4-O-phosphorylation step by converting 4-hydroxytryptamine into norbaeocystin. The methyltransferase psiM then catalyzes iterative methyl transfer to the amino group of norbaeocystin to yield psilocybin via a monomethylated intermediate, baeocystin. The protein is Tryptamine 4-monooxygenase of Psilocybe cyanescens.